A 264-amino-acid chain; its full sequence is Undecaprenyl-diphosphatase (264 aa).

8 helical membrane-spanning segments follow: residues 1-21 (MDLI…FLPI), 39-59 (QGLA…AVYF), 87-107 (WYLI…DDLI), 111-131 (LRST…LWVA), 144-164 (IALS…IPGT), 187-207 (FSFL…GLQL), 208-228 (VLSA…LSAV), and 244-264 (IGML…FIAV).

This sequence belongs to the UppP family.

The protein localises to the cell inner membrane. The catalysed reaction is di-trans,octa-cis-undecaprenyl diphosphate + H2O = di-trans,octa-cis-undecaprenyl phosphate + phosphate + H(+). In terms of biological role, catalyzes the dephosphorylation of undecaprenyl diphosphate (UPP). Confers resistance to bacitracin. The chain is Undecaprenyl-diphosphatase from Teredinibacter turnerae (strain ATCC 39867 / T7901).